A 428-amino-acid chain; its full sequence is 3-phosphoshikimate 1-carboxyvinyltransferase (428 aa).

3-phosphoshikimate is bound by residues K22, S23, and R27. K22 serves as a coordination point for phosphoenolpyruvate. 2 residues coordinate phosphoenolpyruvate: G96 and R124. Residues S170, S171, Q172, S198, D314, N337, and K341 each contribute to the 3-phosphoshikimate site. Position 172 (Q172) interacts with phosphoenolpyruvate. D314 serves as the catalytic Proton acceptor. 3 residues coordinate phosphoenolpyruvate: R345, R387, and K412.

The protein belongs to the EPSP synthase family. As to quaternary structure, monomer.

Its subcellular location is the cytoplasm. The enzyme catalyses 3-phosphoshikimate + phosphoenolpyruvate = 5-O-(1-carboxyvinyl)-3-phosphoshikimate + phosphate. It functions in the pathway metabolic intermediate biosynthesis; chorismate biosynthesis; chorismate from D-erythrose 4-phosphate and phosphoenolpyruvate: step 6/7. Functionally, catalyzes the transfer of the enolpyruvyl moiety of phosphoenolpyruvate (PEP) to the 5-hydroxyl of shikimate-3-phosphate (S3P) to produce enolpyruvyl shikimate-3-phosphate and inorganic phosphate. This Vibrio vulnificus (strain YJ016) protein is 3-phosphoshikimate 1-carboxyvinyltransferase.